Reading from the N-terminus, the 174-residue chain is Adenylate kinase (174 aa).

The segment at 12 to 41 (STGDMLRAAIKAGTLLGLEAKKIIDEGGLV) is NMP. AMP-binding positions include threonine 13, arginine 18, 39–41 (GLV), 67–70 (GFPR), and glutamine 74. Residues 104 to 141 (GRRVHLASGRTYHVTYNPPKVEGKDDVTGEDLIQRDDD) form an LID region. Residues arginine 105 and 114–115 (TY) contribute to the ATP site. The AMP site is built by arginine 138 and arginine 149.

Belongs to the adenylate kinase family. As to quaternary structure, monomer.

It is found in the cytoplasm. The enzyme catalyses AMP + ATP = 2 ADP. It functions in the pathway purine metabolism; AMP biosynthesis via salvage pathway; AMP from ADP: step 1/1. Its function is as follows. Catalyzes the reversible transfer of the terminal phosphate group between ATP and AMP. Plays an important role in cellular energy homeostasis and in adenine nucleotide metabolism. This is Adenylate kinase from Neisseria polysaccharea.